A 349-amino-acid chain; its full sequence is Sphingolipid C4-hydroxylase SUR2 (349 aa).

Helical transmembrane passes span 9-29 (AAGSFPLAFGLKTSFGFMHYA), 50-70 (VLALVAPVVAYWALSGIFHVI), 99-119 (FLEVILQHIIQTIVGLIFMHF), 148-168 (IYYGYMYGMSALKIFAGFLFV), and 209-229 (PVEGFLLDTLGTGIAMTLTHL). In terms of domain architecture, Fatty acid hydroxylase spans 162 to 297 (FAGFLFVDTW…FTFWDNLFQT (136 aa)).

Belongs to the sterol desaturase family.

The protein localises to the endoplasmic reticulum membrane. The catalysed reaction is sphinganine + 2 Fe(II)-[cytochrome b5] + O2 + 2 H(+) = (4R)-hydroxysphinganine + 2 Fe(III)-[cytochrome b5] + H2O. It carries out the reaction an N-acylsphinganine + 2 Fe(II)-[cytochrome b5] + O2 + 2 H(+) = an N-acyl-(4R)-4-hydroxysphinganine + 2 Fe(III)-[cytochrome b5] + H2O. It catalyses the reaction an N-acyleicosasphinganine + 2 Fe(II)-[cytochrome b5] + O2 + 2 H(+) = N-acyl-4-hydroxyeicosasphinganine + 2 Fe(III)-[cytochrome b5] + H2O. Its pathway is membrane lipid metabolism; sphingolipid biosynthesis. In terms of biological role, required for hydroxylation of C-4 in the sphingoid moiety of ceramide. Catalyzes the conversion of sphinganine to phytosphingosine in sphingolipid biosynthesis. Involved in the response to syringomycin. This Saccharomyces cerevisiae (strain ATCC 204508 / S288c) (Baker's yeast) protein is Sphingolipid C4-hydroxylase SUR2 (SUR2).